Reading from the N-terminus, the 666-residue chain is Endogenous retrovirus group K member 6 Gag polyprotein (666 aa).

G2 is lipidated: N-myristoyl glycine. The tract at residues 165 to 264 (GKGPELVGPS…APPSRQGSKL (100 aa)) is disordered. The span at 232–247 (GMPPAPQGRAPYPQPP) shows a compositional bias: pro residues. 2 consecutive CCHC-type zinc fingers follow at residues 544–561 (RKCY…NCPV) and 580–597 (DLCP…QCRS). A disordered region spans residues 598–642 (KFDKNGQPLSGNEQRGQPQAPQQTGAFPIQPFVPQGFQGQQPPLS). A compositionally biased stretch (polar residues) spans 604–622 (QPLSGNEQRGQPQAPQQTG). Residues 624-640 (FPIQPFVPQGFQGQQPP) are compositionally biased toward low complexity.

Belongs to the beta type-B retroviral Gag protein family. HERV class-II K(HML-2) gag subfamily. Myristoylation is essential for retroviral assembly. Alteration of the glycine residue leads to a block in the budding of particles and an accumulation of Gag inside the cell. In terms of processing, specific enzymatic cleavages may yield mature proteins.

The protein resides in the cell membrane. The products of the Gag polyproteins of infectious retroviruses perform highly complex orchestrated tasks during the assembly, budding, maturation, and infection stages of the viral replication cycle. During viral assembly, the proteins form membrane associations and self-associations that ultimately result in budding of an immature virion from the infected cell. Gag precursors also function during viral assembly to selectively bind and package two plus strands of genomic RNA. Endogenous Gag proteins may have kept, lost or modified their original function during evolution. The protein is Endogenous retrovirus group K member 6 Gag polyprotein (ERVK-6) of Homo sapiens (Human).